Here is a 70-residue protein sequence, read N- to C-terminus: Cold shock-like protein CspF (70 aa).

One can recognise a CSD domain in the interval 7–67 (GIVKTFDGKS…GLRGPSAANV (61 aa)).

It localises to the cytoplasm. The chain is Cold shock-like protein CspF (cspF) from Escherichia coli (strain K12).